Consider the following 233-residue polypeptide: Ras-related protein RABA6a (233 aa).

20–27 contacts GTP; that stretch reads GDSAVGKS. An Effector region motif is present at residues 42–50; the sequence is SKPTIGVEF. GTP-binding positions include 68 to 72, 126 to 129, and 156 to 157; these read DTAGQ, NKSD, and SA. S-geranylgeranyl cysteine attachment occurs at residues Cys230 and Cys231.

It belongs to the small GTPase superfamily. Rab family.

It localises to the cell membrane. Its function is as follows. Intracellular vesicle trafficking and protein transport. The chain is Ras-related protein RABA6a (RABA6A) from Arabidopsis thaliana (Mouse-ear cress).